A 485-amino-acid chain; its full sequence is Glycogen synthase (485 aa).

K15 lines the ADP-alpha-D-glucose pocket.

This sequence belongs to the glycosyltransferase 1 family. Bacterial/plant glycogen synthase subfamily.

The enzyme catalyses [(1-&gt;4)-alpha-D-glucosyl](n) + ADP-alpha-D-glucose = [(1-&gt;4)-alpha-D-glucosyl](n+1) + ADP + H(+). It functions in the pathway glycan biosynthesis; glycogen biosynthesis. Synthesizes alpha-1,4-glucan chains using ADP-glucose. This Geobacillus stearothermophilus (Bacillus stearothermophilus) protein is Glycogen synthase (glgA).